A 277-amino-acid polypeptide reads, in one-letter code: Digeranylgeranylglyceryl phosphate synthase (277 aa).

Transmembrane regions (helical) follow at residues 16 to 36, 40 to 60, 83 to 105, 107 to 124, 146 to 166, 202 to 222, 224 to 244, and 256 to 276; these read LLAG…LPEL, ILVF…NDYF, AALW…INIW, FLLA…AWKL, GAIA…AFLV, VGAL…KAGI, LGYL…FLIL, and QILL…ASLV.

It belongs to the UbiA prenyltransferase family. DGGGP synthase subfamily. Requires Mg(2+) as cofactor.

Its subcellular location is the cell membrane. It carries out the reaction sn-3-O-(geranylgeranyl)glycerol 1-phosphate + (2E,6E,10E)-geranylgeranyl diphosphate = 2,3-bis-O-(geranylgeranyl)-sn-glycerol 1-phosphate + diphosphate. It participates in membrane lipid metabolism; glycerophospholipid metabolism. Prenyltransferase that catalyzes the transfer of the geranylgeranyl moiety of geranylgeranyl diphosphate (GGPP) to the C2 hydroxyl of (S)-3-O-geranylgeranylglyceryl phosphate (GGGP). This reaction is the second ether-bond-formation step in the biosynthesis of archaeal membrane lipids. The sequence is that of Digeranylgeranylglyceryl phosphate synthase from Thermococcus kodakarensis (strain ATCC BAA-918 / JCM 12380 / KOD1) (Pyrococcus kodakaraensis (strain KOD1)).